The sequence spans 149 residues: DnaJ homolog subfamily C member 24 (149 aa).

A J domain is found at 11–82 (DWYSILGADP…ETKREYDLQR (72 aa)). The 56-residue stretch at 93-148 (VDAQVYLEEMSWNEGDHSFYLSCRCGGKYSVSKDEAEEVSLISCDTCSLIIELLHY) folds into the DPH-type MB domain. Positions 115, 117, 136, and 139 each coordinate Zn(2+).

Belongs to the DPH4 family. As to quaternary structure, monomer and homooligomer. Iron binding promotes oligomerization.

It is found in the cytoplasm. The protein resides in the cytoskeleton. It functions in the pathway protein modification; peptidyl-diphthamide biosynthesis. In terms of biological role, stimulates the ATPase activity of several Hsp70-type chaperones. This ability is enhanced by iron-binding. The iron-bound form is redox-active and can function as electron carrier. Plays a role in the diphthamide biosynthesis, a post-translational modification of histidine which occurs in translation elongation factor 2 (EEF2) which can be ADP-ribosylated by diphtheria toxin and by Pseudomonas exotoxin A (Eta). The polypeptide is DnaJ homolog subfamily C member 24 (Homo sapiens (Human)).